A 378-amino-acid chain; its full sequence is MSHVDDGFRSLTLKRFPQTDDVNPLLAWEAADEYLLQQLDETEIRGPVLILNDTFGALSCALAEHSPYSIGDSYLSELGTRENLRHNGIAESSVTFLDSTADYPQAPGVVLIKVPKTLALLEQQLRALRKVVTAQTRIIAGAKARDIHTSTLELFEKVLGPTTTTLAWKKARLINCTFSHPQLADAPQTLSWKLEDTGWTIHNHANVFSRTGLDIGARFFMQHLPENLDGEIVDLGCGNGVIGLSLLAKNPQAKVVFVDESPMAVDSSRLNVETNLPEAFERCEFMINNALSGVEPFRFNAVFCNPPFHQKHALTDNIAWEMFHHARRCLKINGELYIVANRHLDYFHKLKKIFGNCATIATNNKFVILKAVKQGRRR.

This sequence belongs to the methyltransferase superfamily. RlmG family.

It is found in the cytoplasm. The catalysed reaction is guanosine(1835) in 23S rRNA + S-adenosyl-L-methionine = N(2)-methylguanosine(1835) in 23S rRNA + S-adenosyl-L-homocysteine + H(+). In terms of biological role, specifically methylates the guanine in position 1835 (m2G1835) of 23S rRNA. The sequence is that of Ribosomal RNA large subunit methyltransferase G from Salmonella agona (strain SL483).